Consider the following 575-residue polypeptide: MHAVRYTQAFIPTLKEAPADAQVASHKLLVRAGFIRQLGAGIYDYLPLAKRSLTKIEAIVREEMNAIGGQEFFLPALHPAEIWKESGRWEVMGDNMFRLKDRKGGDYGLGMTHEEIFTAIARDELRSYRQLPQVWYQIQTKFRDEPRPKSGLLRVRQFTMKDAYSFDVDRAGLDKSYEDQRQAYEKIFTRCGLDFVAVQAHSGSMGGSESSEFMVRTDAGEDLVAACPRCRYAANTETATSRVAAEADGPGLAAPEKFPTPGVVTIEALEQAPHSVPARRQLKTLVYMADERPVIAVVRGDQELNEAKLQTATGAQVVRPAHAEEIPPLMGAHAGSLGAVRFTRARVVVDPSLADRKDMVTGANEDGFHLRGVDVRRDLLAHGATLAELRTVKAGEGCPRCDGALEVFKALEVGHIFKLGTKYSESMKATVLDAGGKQVPIVMGSYGIGVERILAAAIELHHDDNGIVFPMAIAPFHATVLTLGPEPELRKAAEEVVAALGKEGVEVLFDDRDERAGVKFKDADLLGIPIRVAVGKKGLAAGNVEWKLRRGGAVELVPLGEVARKAAEAVRAATT.

This sequence belongs to the class-II aminoacyl-tRNA synthetase family. ProS type 1 subfamily. Homodimer.

The protein resides in the cytoplasm. It carries out the reaction tRNA(Pro) + L-proline + ATP = L-prolyl-tRNA(Pro) + AMP + diphosphate. In terms of biological role, catalyzes the attachment of proline to tRNA(Pro) in a two-step reaction: proline is first activated by ATP to form Pro-AMP and then transferred to the acceptor end of tRNA(Pro). As ProRS can inadvertently accommodate and process non-cognate amino acids such as alanine and cysteine, to avoid such errors it has two additional distinct editing activities against alanine. One activity is designated as 'pretransfer' editing and involves the tRNA(Pro)-independent hydrolysis of activated Ala-AMP. The other activity is designated 'posttransfer' editing and involves deacylation of mischarged Ala-tRNA(Pro). The misacylated Cys-tRNA(Pro) is not edited by ProRS. The sequence is that of Proline--tRNA ligase 1 from Anaeromyxobacter dehalogenans (strain 2CP-C).